Here is a 426-residue protein sequence, read N- to C-terminus: Adenylosuccinate synthetase (426 aa).

GTP is bound by residues 12–18 (GDEGKGK) and 40–42 (GHT). Residue D13 is the Proton acceptor of the active site. The Mg(2+) site is built by D13 and G40. IMP is bound by residues 13–16 (DEGK), 38–41 (NAGH), T125, R139, Q221, T236, and R300. The Proton donor role is filled by H41. 296–302 (TTTGRPR) contributes to the substrate binding site. Residues R302, 328-330 (KLD), and 410-412 (AVG) contribute to the GTP site.

This sequence belongs to the adenylosuccinate synthetase family. In terms of assembly, homodimer. It depends on Mg(2+) as a cofactor.

It is found in the cytoplasm. It catalyses the reaction IMP + L-aspartate + GTP = N(6)-(1,2-dicarboxyethyl)-AMP + GDP + phosphate + 2 H(+). It participates in purine metabolism; AMP biosynthesis via de novo pathway; AMP from IMP: step 1/2. Plays an important role in the de novo pathway of purine nucleotide biosynthesis. Catalyzes the first committed step in the biosynthesis of AMP from IMP. This is Adenylosuccinate synthetase from Syntrophomonas wolfei subsp. wolfei (strain DSM 2245B / Goettingen).